The primary structure comprises 161 residues: Cyclic pyranopterin monophosphate synthase (161 aa).

Residues 75–77 (LCH) and 113–114 (ME) contribute to the substrate site. Asp128 is a catalytic residue.

The protein belongs to the MoaC family. In terms of assembly, homohexamer; trimer of dimers.

It carries out the reaction (8S)-3',8-cyclo-7,8-dihydroguanosine 5'-triphosphate = cyclic pyranopterin phosphate + diphosphate. The protein operates within cofactor biosynthesis; molybdopterin biosynthesis. In terms of biological role, catalyzes the conversion of (8S)-3',8-cyclo-7,8-dihydroguanosine 5'-triphosphate to cyclic pyranopterin monophosphate (cPMP). The sequence is that of Cyclic pyranopterin monophosphate synthase from Escherichia coli O9:H4 (strain HS).